The sequence spans 563 residues: Chaperonin GroEL 1 (563 aa).

ATP contacts are provided by residues 29 to 32 (TIGP), 86 to 90 (DGTTT), glycine 413, and aspartate 492. The segment at 520 to 541 (DKPEPPSAPGAEGGDPMGGMGG) is disordered. The segment covering 530–541 (AEGGDPMGGMGG) has biased composition (gly residues).

This sequence belongs to the chaperonin (HSP60) family. In terms of assembly, forms a cylinder of 14 subunits composed of two heptameric rings stacked back-to-back. Interacts with the co-chaperonin GroES.

The protein localises to the cytoplasm. It carries out the reaction ATP + H2O + a folded polypeptide = ADP + phosphate + an unfolded polypeptide.. Its function is as follows. Together with its co-chaperonin GroES, plays an essential role in assisting protein folding. The GroEL-GroES system forms a nano-cage that allows encapsulation of the non-native substrate proteins and provides a physical environment optimized to promote and accelerate protein folding. This is Chaperonin GroEL 1 from Prochlorococcus marinus (strain NATL1A).